Consider the following 398-residue polypeptide: tRNA (guanine-N(7)-)-methyltransferase (398 aa).

S-adenosyl-L-methionine-binding residues include E124, E149, and D176. D232 contacts substrate.

It belongs to the class I-like SAM-binding methyltransferase superfamily. TrmB family.

The enzyme catalyses guanosine(46) in tRNA + S-adenosyl-L-methionine = N(7)-methylguanosine(46) in tRNA + S-adenosyl-L-homocysteine. It participates in tRNA modification; N(7)-methylguanine-tRNA biosynthesis. In terms of biological role, catalyzes the formation of N(7)-methylguanine at position 46 (m7G46) in tRNA. The chain is tRNA (guanine-N(7)-)-methyltransferase from Helicobacter acinonychis (strain Sheeba).